A 157-amino-acid polypeptide reads, in one-letter code: LNQEKLSSTHFLLFPRAATLTWSDDTRYWSWNPVDFCGYQLEEAQLSRVSWFDCRWTVNTTDLKTNVWYNVFLKVQMGSGASGWNTPLNLELEMPNGSKQASQVVLNDRPRDVWFKLQMGNLMVSDSETCGALRMSLYNHQTNWKMGATLGPLALEA.

Residues C37 and C54 are joined by a disulfide bond.

As to quaternary structure, homodimer. Detected in fruits (at protein level).

The protein resides in the secreted. Binds with high affinity specifically to chito-oligosaccharides. May play a role in plant defense against pathogens by directly binding with the chitin cell wall. Forms filamentous structures at higher concentrations and may promote wound healing by forming filaments with phloem proteins like PP1. This is Lectin from Coccinia grandis (Ivy gourd).